A 369-amino-acid polypeptide reads, in one-letter code: Deoxyhypusine synthase (369 aa).

NAD(+)-binding positions include 105–109 (SNLIS), 131–133 (TAG), Glu-137, and Asp-238. Spermidine is bound at residue 136 to 137 (EE). Asp-243 contacts spermidine. Gly-283 lines the NAD(+) pocket. Residue His-288 coordinates spermidine. 308–309 (TA) contacts NAD(+). Spermidine contacts are provided by residues 314–316 (GSD) and 323–329 (EAVSWGK). The active-site Nucleophile is the Lys-329. 342 to 343 (DA) contributes to the NAD(+) binding site.

Belongs to the deoxyhypusine synthase family. It depends on NAD(+) as a cofactor.

It catalyses the reaction [eIF5A protein]-L-lysine + spermidine = [eIF5A protein]-deoxyhypusine + propane-1,3-diamine. The protein operates within protein modification; eIF5A hypusination. Functionally, catalyzes the NAD-dependent oxidative cleavage of spermidine and the subsequent transfer of the butylamine moiety of spermidine to the epsilon-amino group of a critical lysine residue of the eIF-5A precursor protein to form the intermediate deoxyhypusine residue. This is the first step of the post-translational modification of that lysine into an unusual amino acid residue named hypusine. Hypusination is unique to mature eIF-5A factor and is essential for its function. The protein is Deoxyhypusine synthase (Dhps) of Mus musculus (Mouse).